The following is a 684-amino-acid chain: Threonine--tRNA ligase (684 aa).

The TGS domain occupies 1–66 (MTAVASSAPA…DTDVEVTPVA (66 aa)). A catalytic region spans residues 261-567 (DHRKLGVELD…LTEHYAGAFP (307 aa)). Residues Cys366, His417, and His544 each contribute to the Zn(2+) site.

This sequence belongs to the class-II aminoacyl-tRNA synthetase family. Homodimer. Requires Zn(2+) as cofactor.

The protein resides in the cytoplasm. It catalyses the reaction tRNA(Thr) + L-threonine + ATP = L-threonyl-tRNA(Thr) + AMP + diphosphate + H(+). In terms of biological role, catalyzes the attachment of threonine to tRNA(Thr) in a two-step reaction: L-threonine is first activated by ATP to form Thr-AMP and then transferred to the acceptor end of tRNA(Thr). Also edits incorrectly charged L-seryl-tRNA(Thr). The chain is Threonine--tRNA ligase from Mycolicibacterium smegmatis (strain ATCC 700084 / mc(2)155) (Mycobacterium smegmatis).